The sequence spans 90 residues: Small ribosomal subunit protein bS20 (90 aa).

A disordered region spans residues 1–28; the sequence is MPNTSSASKRLRQNEKRRLLNRATRSNM.

This sequence belongs to the bacterial ribosomal protein bS20 family.

Functionally, binds directly to 16S ribosomal RNA. The sequence is that of Small ribosomal subunit protein bS20 from Rhodopirellula baltica (strain DSM 10527 / NCIMB 13988 / SH1).